The following is a 549-amino-acid chain: MESYKEVWLKAGLIYALNLLSSGNLKPVEIGLGERYFYVDIDSPDILTLDEAKDFAKYNQYDYQLVEDNRGSITVVYNGHQIKLNGGKPNQNVHPKYFQILSISVHHPSPEKQYVRVLGVGFEKEEQLKDYLNWLEKVSEYDHRIIGDRLDLFSFPEEAPPGVVLFHPNGQIIRKEMMRFMEEINDSMGYKEVYTSHVYRSLLWKISGHYDYYKDKMLLFEIDNDEELGIKPMNCPAHILIYKSKVRSYKDLPIRFSEFGHVYRWEKKGELYGLLRVRGFTQDDGHIFLREDQIKDEIKLLMKKTLDVLAIFGFKGDDVRVNLSTRPDESIGTDEQWNKATDALISALNELNIKYEVKEKEGAFYGPKIDFDIRDSLSRWWQLSTIQVDFNLPERFKLEYVDKDGSKKRPVMVHRAIYGSIDRFMAILLEHFRGKLPTWLSPIQVRVLPITDEIEDYGNSLMAKLRENKIRVDMDSGEETLSKRIKKAYDDGVPYLIIVGRKEKDEGKVTVRARGNIEIRGINVEKFVQALVEEIRNKDLNQSAVSKLK.

The catalytic stretch occupies residues 142–437 (DHRIIGDRLD…LLEHFRGKLP (296 aa)). Residues cysteine 235, histidine 286, and histidine 414 each coordinate Zn(2+).

This sequence belongs to the class-II aminoacyl-tRNA synthetase family. In terms of assembly, homodimer. Probably interacts with its editing subunit. It depends on Zn(2+) as a cofactor.

Its subcellular location is the cytoplasm. It carries out the reaction tRNA(Thr) + L-threonine + ATP = L-threonyl-tRNA(Thr) + AMP + diphosphate + H(+). Its function is as follows. Catalyzes the attachment of threonine to tRNA(Thr) in a two-step reaction: L-threonine is first activated by ATP to form Thr-AMP and then transferred to the acceptor end of tRNA(Thr). Also activates L-serine and transfers it to tRNA(Thr) but cannot deacylate incorrectly charged amino acid; unlike most archaea the editing function is found in a freestanding protein. This chain is Threonine--tRNA ligase catalytic subunit, found in Sulfolobus acidocaldarius (strain ATCC 33909 / DSM 639 / JCM 8929 / NBRC 15157 / NCIMB 11770).